The chain runs to 145 residues: Early nodulin-like protein 21 (145 aa).

Positions 1–17 (MFLWLVIVLTISASVSS) are cleaved as a signal peptide. The Phytocyanin domain maps to 18–116 (YEHKLNWVVP…GQKMIVEVIS (99 aa)). N30 and N71 each carry an N-linked (GlcNAc...) asparagine glycan. C70 and C104 are joined by a disulfide. S116 carries the GPI-anchor amidated serine lipid modification. The propeptide at 117–145 (RDHTTTSAAPPAAFAVLLCFFSLSLYFVA) is removed in mature form.

It belongs to the early nodulin-like (ENODL) family. In terms of tissue distribution, mostly expressed in leaves and flowers, and, to a lower extent, in roots and stems, but barely in seedlings and seeds.

It localises to the cell membrane. In terms of biological role, may act as a carbohydrate transporter. The sequence is that of Early nodulin-like protein 21 from Arabidopsis thaliana (Mouse-ear cress).